The primary structure comprises 205 residues: Thiamine-phosphate synthase (205 aa).

4-amino-2-methyl-5-(diphosphooxymethyl)pyrimidine contacts are provided by residues 37-41 (QVREK) and Asn-69. Residues Asp-70 and Asp-89 each contribute to the Mg(2+) site. Ser-108 is a binding site for 4-amino-2-methyl-5-(diphosphooxymethyl)pyrimidine. 134–136 (TGS) is a 2-[(2R,5Z)-2-carboxy-4-methylthiazol-5(2H)-ylidene]ethyl phosphate binding site. Lys-137 lines the 4-amino-2-methyl-5-(diphosphooxymethyl)pyrimidine pocket. Residues Gly-165 and 185–186 (IS) each bind 2-[(2R,5Z)-2-carboxy-4-methylthiazol-5(2H)-ylidene]ethyl phosphate.

Belongs to the thiamine-phosphate synthase family. It depends on Mg(2+) as a cofactor.

It carries out the reaction 2-[(2R,5Z)-2-carboxy-4-methylthiazol-5(2H)-ylidene]ethyl phosphate + 4-amino-2-methyl-5-(diphosphooxymethyl)pyrimidine + 2 H(+) = thiamine phosphate + CO2 + diphosphate. The enzyme catalyses 2-(2-carboxy-4-methylthiazol-5-yl)ethyl phosphate + 4-amino-2-methyl-5-(diphosphooxymethyl)pyrimidine + 2 H(+) = thiamine phosphate + CO2 + diphosphate. The catalysed reaction is 4-methyl-5-(2-phosphooxyethyl)-thiazole + 4-amino-2-methyl-5-(diphosphooxymethyl)pyrimidine + H(+) = thiamine phosphate + diphosphate. It functions in the pathway cofactor biosynthesis; thiamine diphosphate biosynthesis; thiamine phosphate from 4-amino-2-methyl-5-diphosphomethylpyrimidine and 4-methyl-5-(2-phosphoethyl)-thiazole: step 1/1. In terms of biological role, condenses 4-methyl-5-(beta-hydroxyethyl)thiazole monophosphate (THZ-P) and 2-methyl-4-amino-5-hydroxymethyl pyrimidine pyrophosphate (HMP-PP) to form thiamine monophosphate (TMP). This Clostridium botulinum (strain Loch Maree / Type A3) protein is Thiamine-phosphate synthase.